We begin with the raw amino-acid sequence, 70 residues long: Large ribosomal subunit protein bL31 (70 aa).

Cys16, Cys18, Cys37, and Cys40 together coordinate Zn(2+).

It belongs to the bacterial ribosomal protein bL31 family. Type A subfamily. As to quaternary structure, part of the 50S ribosomal subunit. Zn(2+) is required as a cofactor.

Functionally, binds the 23S rRNA. This chain is Large ribosomal subunit protein bL31, found in Colwellia psychrerythraea (strain 34H / ATCC BAA-681) (Vibrio psychroerythus).